Reading from the N-terminus, the 547-residue chain is Germacrene A synthase (547 aa).

Residues Asp300, Asp304, Asp443, and Glu451 each contribute to the Mg(2+) site. The DDXXD motif signature appears at 300–304 (DDTYD).

The protein belongs to the terpene synthase family. Tpsa subfamily. The cofactor is Mg(2+). It depends on Mn(2+) as a cofactor. Expressed in leaves.

The protein resides in the plastid. It localises to the chloroplast. It catalyses the reaction (2E,6E)-farnesyl diphosphate = germacrene A + diphosphate. It carries out the reaction (2E,6E)-farnesyl diphosphate = (1S,2S,4R)-beta-elemene + diphosphate. It functions in the pathway secondary metabolite biosynthesis; terpenoid biosynthesis. Functionally, sesquiterpene synthase involved in the biosynthesis of volatile compounds widely used in aromatherapy and folk medicine, and present in culinary herbs. Mediates the conversion of (2E,6E)-farnesyl diphosphate (FPP) into germacrene A and beta-elemene. Not able to use (2E)-geranyl diphosphate (GPP) as substrate. This chain is Germacrene A synthase, found in Lavandula pedunculata subsp. lusitanica (French lavender).